The following is a 93-amino-acid chain: Putative regulatory protein LBL_1834 (93 aa).

It belongs to the RemA family.

The chain is Putative regulatory protein LBL_1834 from Leptospira borgpetersenii serovar Hardjo-bovis (strain L550).